We begin with the raw amino-acid sequence, 226 residues long: Ribonuclease 3 (226 aa).

Positions 2-129 (IESISKIIKY…LIGAIYLDGG (128 aa)) constitute an RNase III domain. Residue glutamate 42 coordinates Mg(2+). Aspartate 46 is a catalytic residue. Mg(2+) is bound by residues asparagine 115 and glutamate 118. Glutamate 118 is a catalytic residue. The 70-residue stretch at 154-223 (DAKTILQELV…ASLMLNQIHN (70 aa)) folds into the DRBM domain.

This sequence belongs to the ribonuclease III family. In terms of assembly, homodimer. Mg(2+) is required as a cofactor.

It localises to the cytoplasm. The catalysed reaction is Endonucleolytic cleavage to 5'-phosphomonoester.. In terms of biological role, digests double-stranded RNA. Involved in the processing of primary rRNA transcript to yield the immediate precursors to the large and small rRNAs (23S and 16S). Processes some mRNAs, and tRNAs when they are encoded in the rRNA operon. Processes pre-crRNA and tracrRNA of type II CRISPR loci if present in the organism. The chain is Ribonuclease 3 from Ehrlichia chaffeensis (strain ATCC CRL-10679 / Arkansas).